The sequence spans 177 residues: NADH-quinone oxidoreductase subunit B (177 aa).

[4Fe-4S] cluster contacts are provided by Cys56, Cys57, Cys121, and Cys151.

Belongs to the complex I 20 kDa subunit family. NDH-1 is composed of 14 different subunits. Subunits NuoB, C, D, E, F, and G constitute the peripheral sector of the complex. It depends on [4Fe-4S] cluster as a cofactor.

The protein localises to the cell inner membrane. It catalyses the reaction a quinone + NADH + 5 H(+)(in) = a quinol + NAD(+) + 4 H(+)(out). Functionally, NDH-1 shuttles electrons from NADH, via FMN and iron-sulfur (Fe-S) centers, to quinones in the respiratory chain. Couples the redox reaction to proton translocation (for every two electrons transferred, four hydrogen ions are translocated across the cytoplasmic membrane), and thus conserves the redox energy in a proton gradient. This Roseobacter denitrificans (strain ATCC 33942 / OCh 114) (Erythrobacter sp. (strain OCh 114)) protein is NADH-quinone oxidoreductase subunit B.